We begin with the raw amino-acid sequence, 132 residues long: Large-conductance mechanosensitive channel (132 aa).

Transmembrane regions (helical) follow at residues 14-34 and 67-87; these read VIDL…VSSL and GNFI…FMFV.

Belongs to the MscL family. In terms of assembly, homopentamer.

It localises to the cell membrane. Channel that opens in response to stretch forces in the membrane lipid bilayer. May participate in the regulation of osmotic pressure changes within the cell. The polypeptide is Large-conductance mechanosensitive channel (Bacillus cereus (strain AH820)).